Here is a 585-residue protein sequence, read N- to C-terminus: Butyrophilin subfamily 3 member A3 (585 aa).

Positions methionine 1–alanine 29 are cleaved as a signal peptide. Ig-like V-type domains are found at residues glutamine 30–valine 139 and alanine 145–serine 236. Over glutamine 30–tryptophan 248 the chain is Extracellular. Disulfide bonds link cysteine 52/cysteine 126 and cysteine 166/cysteine 220. N-linked (GlcNAc...) asparagine glycosylation is present at asparagine 115. A helical transmembrane segment spans residues isoleucine 249–phenylalanine 269. At leucine 270–tyrosine 585 the chain is on the cytoplasmic side. In terms of domain architecture, B30.2/SPRY spans arginine 322 to valine 518. Residues alanine 560–tyrosine 585 are disordered. The segment covering serine 566–lysine 576 has biased composition (polar residues).

It belongs to the immunoglobulin superfamily. BTN/MOG family.

The protein resides in the membrane. This Pongo abelii (Sumatran orangutan) protein is Butyrophilin subfamily 3 member A3 (BTN3A3).